The following is a 665-amino-acid chain: Methionine--tRNA ligase (665 aa).

The 'HIGH' region motif lies at Tyr-12–Ser-22. Residues Lys-308–Ser-312 carry the 'KMSKS' region motif. An ATP-binding site is contributed by Lys-311. A tRNA-binding domain is found at Thr-562–Gly-665.

This sequence belongs to the class-I aminoacyl-tRNA synthetase family. MetG type 2B subfamily. As to quaternary structure, homodimer.

It localises to the cytoplasm. The enzyme catalyses tRNA(Met) + L-methionine + ATP = L-methionyl-tRNA(Met) + AMP + diphosphate. Is required not only for elongation of protein synthesis but also for the initiation of all mRNA translation through initiator tRNA(fMet) aminoacylation. In Streptococcus pyogenes serotype M6 (strain ATCC BAA-946 / MGAS10394), this protein is Methionine--tRNA ligase (metG).